A 528-amino-acid polypeptide reads, in one-letter code: Chromosomal replication initiator protein DnaA (528 aa).

The domain I, interacts with DnaA modulators stretch occupies residues 1–104 (MNDDPNALAR…PVDDEPESDP (104 aa)). Positions 95–158 (PVDDEPESDP…TDFEEVDDDR (64 aa)) are disordered. Positions 104-123 (PPSRDHRPEPEPLHTPRHLE) are enriched in basic and acidic residues. The segment at 105–187 (PSRDHRPEPE…GPAPSATGGN (83 aa)) is domain II. Acidic residues predominate over residues 149 to 158 (TDFEEVDDDR). The tract at residues 188-404 (SLNAKYTFDT…GALIRVTAFA (217 aa)) is domain III, AAA+ region. Residues G232, G234, K235, and T236 each coordinate ATP. The interval 405 to 528 (SLNRQPLDLT…TARIKQRSKR (124 aa)) is domain IV, binds dsDNA.

The protein belongs to the DnaA family. Oligomerizes as a right-handed, spiral filament on DNA at oriC.

It localises to the cytoplasm. Functionally, plays an essential role in the initiation and regulation of chromosomal replication. ATP-DnaA binds to the origin of replication (oriC) to initiate formation of the DNA replication initiation complex once per cell cycle. Binds the DnaA box (a 9 base pair repeat at the origin) and separates the double-stranded (ds)DNA. Forms a right-handed helical filament on oriC DNA; dsDNA binds to the exterior of the filament while single-stranded (ss)DNA is stabiized in the filament's interior. The ATP-DnaA-oriC complex binds and stabilizes one strand of the AT-rich DNA unwinding element (DUE), permitting loading of DNA polymerase. After initiation quickly degrades to an ADP-DnaA complex that is not apt for DNA replication. Binds acidic phospholipids. The chain is Chromosomal replication initiator protein DnaA from Rhodococcus jostii (strain RHA1).